The sequence spans 240 residues: Glutathione S-transferase theta-1 (240 aa).

The 81-residue stretch at 2–82 (VLELYLDLLS…YLAHKYKVPD (81 aa)) folds into the GST N-terminal domain. Glutathione-binding positions include histidine 40, 53–54 (KV), and 66–67 (ES). Positions 88 to 223 (DLQARARVDE…ILKVRDCPPA (136 aa)) constitute a GST C-terminal domain.

It belongs to the GST superfamily. Theta family. In terms of assembly, homodimer. As to expression, in liver, highest expression found in central vein limiting plate hepatocytes. In lung, expressed mainly in club cells of the bronchiolar epithelium and, at low levels, in type II alveolar cells.

Its subcellular location is the cytoplasm. It carries out the reaction RX + glutathione = an S-substituted glutathione + a halide anion + H(+). Conjugation of reduced glutathione to a wide number of exogenous and endogenous hydrophobic electrophiles. Also binds steroids, bilirubin, carcinogens and numerous organic anions. Has dichloromethane dehalogenase activity. The polypeptide is Glutathione S-transferase theta-1 (Gstt1) (Rattus norvegicus (Rat)).